Consider the following 488-residue polypeptide: 3-octaprenyl-4-hydroxybenzoate carboxy-lyase (488 aa).

N172 provides a ligand contact to Mn(2+). Prenylated FMN-binding positions include 175–177 (IYR), 189–191 (RWL), and 194–195 (RG). A Mn(2+)-binding site is contributed by E238. D287 serves as the catalytic Proton donor.

The protein belongs to the UbiD family. Homohexamer. The cofactor is prenylated FMN. Mn(2+) serves as cofactor.

It localises to the cell membrane. It catalyses the reaction a 4-hydroxy-3-(all-trans-polyprenyl)benzoate + H(+) = a 2-(all-trans-polyprenyl)phenol + CO2. Its pathway is cofactor biosynthesis; ubiquinone biosynthesis. Functionally, catalyzes the decarboxylation of 3-octaprenyl-4-hydroxy benzoate to 2-octaprenylphenol, an intermediate step in ubiquinone biosynthesis. This chain is 3-octaprenyl-4-hydroxybenzoate carboxy-lyase, found in Legionella pneumophila (strain Corby).